Reading from the N-terminus, the 394-residue chain is V-type proton ATPase subunit C (394 aa).

Residue Ser-17 is modified to Phosphoserine.

Belongs to the V-ATPase C subunit family. In terms of assembly, V-ATPase is a heteromultimeric enzyme composed of a peripheral catalytic V1 complex (components A to H) attached to an integral membrane V0 proton pore complex (components: a, c, c', c'', d, e, f and VOA1).

The protein localises to the cytoplasm. It localises to the vacuole membrane. Its function is as follows. Subunit of the V1 complex of vacuolar(H+)-ATPase (V-ATPase), a multisubunit enzyme composed of a peripheral complex (V1) that hydrolyzes ATP and a membrane integral complex (V0) that translocates protons. V-ATPase is responsible for acidifying and maintaining the pH of intracellular compartments. Subunit C is necessary for the assembly of the catalytic sector of the enzyme and is likely to have a specific function in its catalytic activity. Reversibly leaves the enzyme after glucose depletion, causing the catalytic subcomplex V1 to detach from the V0 section. The protein is V-type proton ATPase subunit C of Schizosaccharomyces pombe (strain 972 / ATCC 24843) (Fission yeast).